The sequence spans 257 residues: MPELLNPAPVAHLRHLLRAHSPLVHCMTNDVVQTFTANVLLAVGASPAMVIDPREAAQFAAIADALLINVGTLTEDRAVAMRAAVEHARQAGKPWTLDPVAVGALTVRTAFCHELLALQPAAIRGNASEILALAGMSAGGRGVDTTDTAAAALPAAQALARRLATVVAVTGEVDYVTDGERVLSVAGGNPLMTRVVGTGCALSAVVAASAALPGDRLENVAAACGLMKQAGEIAARQGGPGSFIPAFLDALYQEVQG.

M49 contacts substrate. R124 and T170 together coordinate ATP. G197 provides a ligand contact to substrate.

It belongs to the Thz kinase family. Requires Mg(2+) as cofactor.

It catalyses the reaction 5-(2-hydroxyethyl)-4-methylthiazole + ATP = 4-methyl-5-(2-phosphooxyethyl)-thiazole + ADP + H(+). Its pathway is cofactor biosynthesis; thiamine diphosphate biosynthesis; 4-methyl-5-(2-phosphoethyl)-thiazole from 5-(2-hydroxyethyl)-4-methylthiazole: step 1/1. In terms of biological role, catalyzes the phosphorylation of the hydroxyl group of 4-methyl-5-beta-hydroxyethylthiazole (THZ). The chain is Hydroxyethylthiazole kinase from Klebsiella pneumoniae (strain 342).